Here is a 695-residue protein sequence, read N- to C-terminus: Elongation factor G (695 aa).

The tr-type G domain maps to 8–282; it reads EKTRNIGIMA…AVLDYLPAPT (275 aa). GTP-binding positions include 17–24, 81–85, and 135–138; these read AHIDAGKT, DTPGH, and NKMD.

This sequence belongs to the TRAFAC class translation factor GTPase superfamily. Classic translation factor GTPase family. EF-G/EF-2 subfamily.

It is found in the cytoplasm. Its function is as follows. Catalyzes the GTP-dependent ribosomal translocation step during translation elongation. During this step, the ribosome changes from the pre-translocational (PRE) to the post-translocational (POST) state as the newly formed A-site-bound peptidyl-tRNA and P-site-bound deacylated tRNA move to the P and E sites, respectively. Catalyzes the coordinated movement of the two tRNA molecules, the mRNA and conformational changes in the ribosome. In Listeria monocytogenes serotype 4b (strain CLIP80459), this protein is Elongation factor G.